The sequence spans 318 residues: Aspartate carbamoyltransferase catalytic subunit (318 aa).

Carbamoyl phosphate is bound by residues arginine 58 and threonine 59. Residue lysine 86 participates in L-aspartate binding. Positions 108, 141, and 144 each coordinate carbamoyl phosphate. Positions 174 and 226 each coordinate L-aspartate. Positions 270 and 271 each coordinate carbamoyl phosphate.

The protein belongs to the aspartate/ornithine carbamoyltransferase superfamily. ATCase family. As to quaternary structure, heterododecamer (2C3:3R2) of six catalytic PyrB chains organized as two trimers (C3), and six regulatory PyrI chains organized as three dimers (R2).

It carries out the reaction carbamoyl phosphate + L-aspartate = N-carbamoyl-L-aspartate + phosphate + H(+). It functions in the pathway pyrimidine metabolism; UMP biosynthesis via de novo pathway; (S)-dihydroorotate from bicarbonate: step 2/3. In terms of biological role, catalyzes the condensation of carbamoyl phosphate and aspartate to form carbamoyl aspartate and inorganic phosphate, the committed step in the de novo pyrimidine nucleotide biosynthesis pathway. In Lactobacillus helveticus (strain DPC 4571), this protein is Aspartate carbamoyltransferase catalytic subunit.